The chain runs to 91 residues: Putative pterin-4-alpha-carbinolamine dehydratase (91 aa).

This sequence belongs to the pterin-4-alpha-carbinolamine dehydratase family.

The enzyme catalyses (4aS,6R)-4a-hydroxy-L-erythro-5,6,7,8-tetrahydrobiopterin = (6R)-L-erythro-6,7-dihydrobiopterin + H2O. This is Putative pterin-4-alpha-carbinolamine dehydratase from Sulfolobus acidocaldarius (strain ATCC 33909 / DSM 639 / JCM 8929 / NBRC 15157 / NCIMB 11770).